The following is a 432-amino-acid chain: Transcriptional adapter 3 (432 aa).

A Glycyl lysine isopeptide (Lys-Gly) (interchain with G-Cter in SUMO2) cross-link involves residue Lys21. Residues 40-69 (IEELDTLQLELETLLSSASRRLRVLEAETQ) are a coiled coil. A disordered region spans residues 87–127 (GRDHELGAPPKHGKPKKQKLEGKTGHGPGPGPGRPKSKNVQ). A Glycyl lysine isopeptide (Lys-Gly) (interchain with G-Cter in SUMO2) cross-link involves residue Lys129. Positions 272-319 (NIISPMEDSPIPDMSGKESGADGASTSPRNQNKPFSVPHTKSLESRIK) are disordered. Phosphoserine occurs at positions 280 and 298. Over residues 295-305 (ASTSPRNQNKP) the composition is skewed to polar residues. Residues 367 to 407 (LLRLAKEEVSRQELRQRVRMADNEVMDAFRKIMAARQKKRT) are a coiled coil. Lys418 is subject to N6-acetyllysine.

It belongs to the NGG1 family. In terms of assembly, the PCAF complex is composed of a number of TBP-associated factors (TAFS), such as TAF5, TAF5L, TAF6, TAF6L, TAF9, TAF10 and TAF12, PCAF, and also PCAF-associated factors (PAFs), such as TADA2L/ADA2, TADA3L/ADA3 and SPT3. Interacts directly with TADA2L and PCAF and also with the high-risk HPV oncoprotein E6. Component of the STAGA transcription coactivator-HAT complex, at least composed of SUPT3H, GCN5L2, TAF5L, TAF6L, SUPT7L, TADA3L, TAD1L, TAF10, TAF12, TRRAP and TAF9. Component of the TFTC-HAT complex. Component of the ADA2A-containing complex (ATAC), composed of KAT14, KAT2A, TADA2L, TADA3L, ZZ3, MBIP, WDR5, YEATS2, CCDC101 and DR1.

The protein resides in the nucleus. Functionally, functions as a component of the PCAF complex. The PCAF complex is capable of efficiently acetylating histones in a nucleosomal context. The PCAF complex could be considered as the human version of the yeast SAGA complex. Also known as a coactivator for p53/TP53-dependent transcriptional activation. Component of the ATAC complex, a complex with histone acetyltransferase activity on histones H3 and H4. The sequence is that of Transcriptional adapter 3 (Tada3) from Mus musculus (Mouse).